The sequence spans 238 residues: Probable transcriptional regulatory protein M6_Spy0297 (238 aa).

It belongs to the TACO1 family. YeeN subfamily.

It localises to the cytoplasm. The protein is Probable transcriptional regulatory protein M6_Spy0297 of Streptococcus pyogenes serotype M6 (strain ATCC BAA-946 / MGAS10394).